A 323-amino-acid chain; its full sequence is tRNA dimethylallyltransferase (323 aa).

An ATP-binding site is contributed by 12–19 (GPTAAGKT). Residue 14–19 (TAAGKT) coordinates substrate. Interaction with substrate tRNA stretches follow at residues 37–40 (DSAL) and 161–165 (QRLIR).

The protein belongs to the IPP transferase family. Monomer. Requires Mg(2+) as cofactor.

It carries out the reaction adenosine(37) in tRNA + dimethylallyl diphosphate = N(6)-dimethylallyladenosine(37) in tRNA + diphosphate. Catalyzes the transfer of a dimethylallyl group onto the adenine at position 37 in tRNAs that read codons beginning with uridine, leading to the formation of N6-(dimethylallyl)adenosine (i(6)A). The chain is tRNA dimethylallyltransferase from Pseudomonas savastanoi pv. phaseolicola (strain 1448A / Race 6) (Pseudomonas syringae pv. phaseolicola (strain 1448A / Race 6)).